Here is an 827-residue protein sequence, read N- to C-terminus: Beta-galactosidase 2 (827 aa).

The signal sequence occupies residues Met1–Ala24. The Proton donor role is filled by Glu182. A glycan (N-linked (GlcNAc...) asparagine) is linked at Asn209. Glu251 functions as the Nucleophile in the catalytic mechanism. N-linked (GlcNAc...) asparagine glycosylation occurs at Asn458. One can recognise an SUEL-type lectin domain in the interval Asp741–Gly827.

Belongs to the glycosyl hydrolase 35 family.

It localises to the secreted. It is found in the extracellular space. The protein localises to the apoplast. It catalyses the reaction Hydrolysis of terminal non-reducing beta-D-galactose residues in beta-D-galactosides.. The chain is Beta-galactosidase 2 from Oryza sativa subsp. japonica (Rice).